The following is a 188-amino-acid chain: Peptidyl-tRNA hydrolase (188 aa).

Residue Tyr14 participates in tRNA binding. The Proton acceptor role is filled by His19. Residues Tyr64, Asn66, and Asn113 each coordinate tRNA.

The protein belongs to the PTH family. In terms of assembly, monomer.

It is found in the cytoplasm. It carries out the reaction an N-acyl-L-alpha-aminoacyl-tRNA + H2O = an N-acyl-L-amino acid + a tRNA + H(+). Hydrolyzes ribosome-free peptidyl-tRNAs (with 1 or more amino acids incorporated), which drop off the ribosome during protein synthesis, or as a result of ribosome stalling. Its function is as follows. Catalyzes the release of premature peptidyl moieties from peptidyl-tRNA molecules trapped in stalled 50S ribosomal subunits, and thus maintains levels of free tRNAs and 50S ribosomes. The chain is Peptidyl-tRNA hydrolase from Chloroflexus aurantiacus (strain ATCC 29364 / DSM 637 / Y-400-fl).